A 398-amino-acid polypeptide reads, in one-letter code: Phosphoglycerate kinase (398 aa).

Substrate-binding positions include 24–26 (DFN), R40, 63–66 (HMGR), R122, and R155. ATP is bound by residues K206, G294, E325, and 354-357 (GGDS).

The protein belongs to the phosphoglycerate kinase family. As to quaternary structure, monomer.

Its subcellular location is the cytoplasm. It catalyses the reaction (2R)-3-phosphoglycerate + ATP = (2R)-3-phospho-glyceroyl phosphate + ADP. The protein operates within carbohydrate degradation; glycolysis; pyruvate from D-glyceraldehyde 3-phosphate: step 2/5. The polypeptide is Phosphoglycerate kinase (Picosynechococcus sp. (strain ATCC 27264 / PCC 7002 / PR-6) (Agmenellum quadruplicatum)).